We begin with the raw amino-acid sequence, 105 residues long: Replication initiation control protein YabA (105 aa).

4 residues coordinate Zn(2+): His79, Cys81, Cys95, and Cys98.

This sequence belongs to the YabA family. In terms of assembly, homotetramer. Interacts with both DnaA and DnaN, acting as a bridge between these two proteins. The cofactor is Zn(2+).

Its subcellular location is the cytoplasm. The protein localises to the nucleoid. In terms of biological role, involved in control of chromosome replication initiation. Inhibits the cooperative binding of DnaA to the oriC region, thus negatively regulating initiation of chromosome replication. Inhibits the ability of DnaA-ATP to form a helix on DNA; does not disassemble preformed DnaA-DNA helices. Decreases the residence time of DnaA on the chromosome at its binding sites (oriC, replication forks and promoter-binding sites). Tethers DnaA to the replication machinery via the DNA polymerase beta sliding clamp subunit (dnaN). Associates with oriC and other DnaA targets on the chromosome in a DnaA-dependent manner. The polypeptide is Replication initiation control protein YabA (Streptococcus sanguinis (strain SK36)).